The chain runs to 122 residues: Heat-labile enterotoxin IIB, B chain (122 aa).

The N-terminal stretch at 1-23 (MSFKKIIKAFVIMAALVSVQAHA) is a signal peptide. A disulfide bond links Cys-33 and Cys-104.

Heterohexamer of one A chain and of five B chains.

Functionally, the biological activity of the toxin is produced by the A chain, which activates intracellular adenyl cyclase. The chain is Heat-labile enterotoxin IIB, B chain from Escherichia coli.